Reading from the N-terminus, the 184-residue chain is MTRLIFLGPPGAGKGTQAQILAEHLHIPHISTGDILRQAMKEQTPLGIKAQSYVDSGELVPDQLVQDLVEERLEQADAKSGWILDGFPRKVTQAAFLEELLQKTGQGGERVVNLDAADDVVVARLLSRGRKDDTEEVIRRRLEIYRSDTAPLIDYYSDRQKLLTINGDQSQEEVTHELKATLGS.

11 to 16 (GAGKGT) is an ATP binding site. The tract at residues 31-60 (STGDILRQAMKEQTPLGIKAQSYVDSGELV) is NMP. Residues Thr-32, Arg-37, 58-60 (ELV), 86-89 (GFPR), and Gln-93 contribute to the AMP site. Residues 127–133 (SRGRKDD) form an LID region. Position 128 (Arg-128) interacts with ATP. Positions 130 and 141 each coordinate AMP. Gln-169 serves as a coordination point for ATP.

The protein belongs to the adenylate kinase family. As to quaternary structure, monomer.

It localises to the cytoplasm. It carries out the reaction AMP + ATP = 2 ADP. It functions in the pathway purine metabolism; AMP biosynthesis via salvage pathway; AMP from ADP: step 1/1. Functionally, catalyzes the reversible transfer of the terminal phosphate group between ATP and AMP. Plays an important role in cellular energy homeostasis and in adenine nucleotide metabolism. This is Adenylate kinase 1 from Nostoc sp. (strain PCC 7120 / SAG 25.82 / UTEX 2576).